The following is a 396-amino-acid chain: Ribosomal RNA large subunit methyltransferase G (396 aa).

It belongs to the methyltransferase superfamily. RlmG family.

Its subcellular location is the cytoplasm. It catalyses the reaction guanosine(1835) in 23S rRNA + S-adenosyl-L-methionine = N(2)-methylguanosine(1835) in 23S rRNA + S-adenosyl-L-homocysteine + H(+). Specifically methylates the guanine in position 1835 (m2G1835) of 23S rRNA. The chain is Ribosomal RNA large subunit methyltransferase G from Yersinia enterocolitica serotype O:8 / biotype 1B (strain NCTC 13174 / 8081).